The primary structure comprises 526 residues: Glutamate--cysteine ligase (526 aa).

Belongs to the glutamate--cysteine ligase type 1 family. Type 1 subfamily.

It catalyses the reaction L-cysteine + L-glutamate + ATP = gamma-L-glutamyl-L-cysteine + ADP + phosphate + H(+). It functions in the pathway sulfur metabolism; glutathione biosynthesis; glutathione from L-cysteine and L-glutamate: step 1/2. In Proteus mirabilis (strain HI4320), this protein is Glutamate--cysteine ligase.